Here is a 434-residue protein sequence, read N- to C-terminus: Oxysterol-binding protein homolog 4 (434 aa).

Residues Ser7–Ala29 are ALPS motif. The OSBP-related domain (ORD) stretch occupies residues Ser16–Asp366. Leu24–Ala29 serves as a coordination point for a 1,2-diacyl-sn-glycero-3-phospho-(1D-myo-inositol 4-phosphate). Gln96 serves as a coordination point for 20-hydroxycholesterol. Position 96 (Gln96) interacts with 25-hydroxycholesterol. Residues Gln96 and Arg100 each contribute to the 7beta-hydroxycholesterol site. Gln96 provides a ligand contact to cholesterol. Position 96 (Gln96) interacts with ergosterol. A 1,2-diacyl-sn-glycero-3-phospho-(1D-myo-inositol 4-phosphate) contacts are provided by residues Lys109 to Asn112, His143 to His144, Lys336, Glu340, and Arg344. Position 370 is a phosphothreonine (Thr370). The residue at position 389 (Ser389) is a Phosphoserine.

It belongs to the OSBP family.

The protein resides in the cytoplasm. It is found in the golgi apparatus membrane. In terms of biological role, lipid transport protein (LTP) involved in non-vesicular transfer of lipids between membranes. Functions in phosphoinositide-coupled directional transport of various lipids by carrying the lipid molecule in a hydrophobic pocket and transferring it between membranes through the cytosol. Involved in maintenance of intracellular sterol distribution and homeostasis. Involved in lipid countertransport between the Golgi complex and membranes of the endoplasmic reticulum. Specifically exchanges sterol with phosphatidylinositol 4-phosphate (PI4P), delivering sterol to the Golgi in exchange for PI4P, which is delivered to the ER-localized PI4P phosphatase SAC1 for degradation. Thus, by maintaining a PI4P gradient at the ER/Golgi interface, SAC1 may drive PS transport. Displays a similar affinity for PI4P and sterols. Binds sterol and PI4P in a mutually exclusive manner. Involved in ergosterol transport from the plasma membrane (PM) to the ER. Mediates sterol transport from the ER to mitochondria. Involved in the negative regulation of Golgi-derived transport vesicle biogenesis. Plays a role in the positive regulation of vesicular transport of ceramide from the ER to the Golgi, negatively regulating COPII-mediated ER export of cargos. This Saccharomyces cerevisiae (strain ATCC 204508 / S288c) (Baker's yeast) protein is Oxysterol-binding protein homolog 4.